The following is a 119-amino-acid chain: Large ribosomal subunit protein bL19 (119 aa).

Belongs to the bacterial ribosomal protein bL19 family.

Its function is as follows. This protein is located at the 30S-50S ribosomal subunit interface and may play a role in the structure and function of the aminoacyl-tRNA binding site. The polypeptide is Large ribosomal subunit protein bL19 (rplS) (Mycoplasma genitalium (strain ATCC 33530 / DSM 19775 / NCTC 10195 / G37) (Mycoplasmoides genitalium)).